The sequence spans 432 residues: Asparagine--tRNA ligase 2 (432 aa).

Belongs to the class-II aminoacyl-tRNA synthetase family. As to quaternary structure, homodimer.

It is found in the cytoplasm. It carries out the reaction tRNA(Asn) + L-asparagine + ATP = L-asparaginyl-tRNA(Asn) + AMP + diphosphate + H(+). The protein is Asparagine--tRNA ligase 2 (asnS2) of Lactiplantibacillus plantarum (strain ATCC BAA-793 / NCIMB 8826 / WCFS1) (Lactobacillus plantarum).